We begin with the raw amino-acid sequence, 282 residues long: D-alanine aminotransferase (282 aa).

Position 32 (Tyr-32) interacts with substrate. Residue Arg-51 coordinates pyridoxal 5'-phosphate. Arg-99 and His-101 together coordinate substrate. Lys-146 (proton acceptor) is an active-site residue. Lys-146 carries the N6-(pyridoxal phosphate)lysine modification. A pyridoxal 5'-phosphate-binding site is contributed by Glu-178.

It belongs to the class-IV pyridoxal-phosphate-dependent aminotransferase family. Homodimer. Pyridoxal 5'-phosphate is required as a cofactor.

The enzyme catalyses D-alanine + 2-oxoglutarate = D-glutamate + pyruvate. In terms of biological role, acts on the D-isomers of alanine, leucine, aspartate, glutamate, aminobutyrate, norvaline and asparagine. The enzyme transfers an amino group from a substrate D-amino acid to the pyridoxal phosphate cofactor to form pyridoxamine and an alpha-keto acid in the first half-reaction. The second half-reaction is the reverse of the first, transferring the amino group from the pyridoxamine to a second alpha-keto acid to form the product D-amino acid via a ping-pong mechanism. This is an important process in the formation of D-alanine and D-glutamate, which are essential bacterial cell wall components. This Staphylococcus aureus (strain MW2) protein is D-alanine aminotransferase (dat).